A 376-amino-acid chain; its full sequence is Enoyl-[acyl-carrier-protein] reductase, mitochondrial (376 aa).

Residues 1-12 (MLRTLRTSQLAR) constitute a mitochondrion transit peptide. Residue tyrosine 79 is the Proton donor of the active site. NADP(+) contacts are provided by residues asparagine 160, 183-186 (NSGV), 206-208 (RDR), 277-280 (YGGM), 302-304 (YWL), and lysine 368.

It belongs to the zinc-containing alcohol dehydrogenase family. Quinone oxidoreductase subfamily. Homodimer.

Its subcellular location is the mitochondrion matrix. The enzyme catalyses a 2,3-saturated acyl-[ACP] + NADP(+) = a (2E)-enoyl-[ACP] + NADPH + H(+). Functionally, catalyzes the NADPH-dependent reduction of trans-2-enoyl thioesters in mitochondrial fatty acid synthesis (fatty acid synthesis type II). Fatty acid chain elongation in mitochondria uses acyl carrier protein (ACP) as an acyl group carrier, but the enzyme accepts both ACP and CoA thioesters as substrates in vitro. Required for respiration and the maintenance of the mitochondrial compartment. This chain is Enoyl-[acyl-carrier-protein] reductase, mitochondrial (ETR1), found in Yarrowia lipolytica (strain CLIB 122 / E 150) (Yeast).